The following is an 819-amino-acid chain: MRYDPGLIEEKWQKFWENEQVFKAEEDETKTKYYVLDMFPYPSGAGLHVGHLIGYTATDIVARYKRAQGFSVLHPMGWDSFGLPAEQYAIRTGTHPRETTEKNIANFKKQLTAMGFSYDESREFATSDPEYYKWTQKLFLILYEKGLAYMADMAVNYCPELGTVLSNEEIENGFSVDGGYPVERRMLRQWVLRITAFADQLLEGLDELDWPESVKQLQKNWIGKSSGASVNFATEHGVIEVFTTRPDTLIGVSFLALAPEHPLVDLLTSDEQKAVVAQYIKETQSKSERDRISEMKTKSGVFTGSYAKHPVTHKLIPIWIADYVLIGFGSGAVMGVPAHDERDLLFAEQFNLPVVSVLNKEGVCINSCCEGFHLDGLSGEEAKQYVINFLEENHLGAAKIAYKLRDWLFSRQRYWGEPIPIIHFEDGSCRPLRDYELPLLPPEIQDYRPEGVGQGPLAKVREWVQVFDTETQRAGKRETHTMPQWAGSCWYYLRFCDAHNSAAPWAKEKEQYWMPVDLYIGGAEHAVLHLLYARFWHQVFYEAGIVSTPEPFKKLVNQGLVLATSYRIPGKGYIYPEIAKEENGKWVAPSGEELDVRQEKMSKSKLNGVDPQILIDEFGADAVRMYAMFSGPLDKNKLWSNQGVAGCRRFLNRFYEMVSSDRVKEDNNFEGLSLAHKLVQRVTDAIEKLSLNTIPSSFMEFINDFVKLAVYPKSAVEMAVRALAPIAPHISEELWVLLGNSPGVQKSGWPSVLPEYLEGQTVTIVVQVNGKLRARLDIMKDASKEEVLALARESASKYLEGCEVKKAIFVPARLVNFVV.

The 'HIGH' region signature appears at 40-51 (PYPSGAGLHVGH). Positions 600–604 (KMSKS) match the 'KMSKS' region motif. An ATP-binding site is contributed by K603.

Belongs to the class-I aminoacyl-tRNA synthetase family.

The protein resides in the cytoplasm. It catalyses the reaction tRNA(Leu) + L-leucine + ATP = L-leucyl-tRNA(Leu) + AMP + diphosphate. This chain is Leucine--tRNA ligase, found in Chlamydia trachomatis serovar D (strain ATCC VR-885 / DSM 19411 / UW-3/Cx).